The sequence spans 86 residues: Large ribosomal subunit protein bL31 (86 aa).

Residues 64-86 form a disordered region; sequence KYGMGSANSSESKDQKEEKDSKK. Residues 74–86 are compositionally biased toward basic and acidic residues; the sequence is ESKDQKEEKDSKK.

The protein belongs to the bacterial ribosomal protein bL31 family. Type A subfamily. Part of the 50S ribosomal subunit.

In terms of biological role, binds the 23S rRNA. This chain is Large ribosomal subunit protein bL31, found in Prochlorococcus marinus (strain MIT 9301).